Here is a 129-residue protein sequence, read N- to C-terminus: Small ribosomal subunit protein uS11 (129 aa).

This sequence belongs to the universal ribosomal protein uS11 family. In terms of assembly, part of the 30S ribosomal subunit. Interacts with proteins S7 and S18. Binds to IF-3.

Located on the platform of the 30S subunit, it bridges several disparate RNA helices of the 16S rRNA. Forms part of the Shine-Dalgarno cleft in the 70S ribosome. The polypeptide is Small ribosomal subunit protein uS11 (Parvibaculum lavamentivorans (strain DS-1 / DSM 13023 / NCIMB 13966)).